A 119-amino-acid polypeptide reads, in one-letter code: Protein TusC (119 aa).

The protein belongs to the DsrF/TusC family. In terms of assembly, heterohexamer, formed by a dimer of trimers. The hexameric TusBCD complex contains 2 copies each of TusB, TusC and TusD. The TusBCD complex interacts with TusE.

It localises to the cytoplasm. In terms of biological role, part of a sulfur-relay system required for 2-thiolation of 5-methylaminomethyl-2-thiouridine (mnm(5)s(2)U) at tRNA wobble positions. This Buchnera aphidicola subsp. Acyrthosiphon pisum (strain APS) (Acyrthosiphon pisum symbiotic bacterium) protein is Protein TusC.